The primary structure comprises 298 residues: Chitin deacetylase (298 aa).

The N-terminal stretch at 1–16 (MLAPLFAALLAGAATA) is a signal peptide. The 184-residue stretch at 39-222 (NTFALTFDDG…AIKAKGLTPV (184 aa)) folds into the NodB homology domain. The Proton acceptor role is filled by Asp-46. Residue Asp-46 coordinates acetate. Co(2+)-binding residues include Asp-47, His-99, and His-103. Tyr-140 is an acetate binding site. The active-site Proton donor is the His-196. Positions 256-298 (DDTCGGSNGYVCQNSQCCSQWGWCGTTSEYCAAGCQAAYGPCT) constitute a Chitin-binding type-1 domain. 4 disulfides stabilise this stretch: Cys-259–Cys-273, Cys-267–Cys-279, Cys-272–Cys-286, and Cys-290–Cys-297.

Belongs to the polysaccharide deacetylase family. The cofactor is Co(2+).

Its subcellular location is the secreted. The enzyme catalyses [(1-&gt;4)-N-acetyl-beta-D-glucosaminyl](n) + n H2O = chitosan + n acetate. With respect to regulation, inhibited by Fe(2+) and to a lesser extent by Mn(2+). Functionally, hydrolyzes the N-acetamido groups of N-acetyl-D-glucosamine polymers in chitin to form chitosan and acetate. May play a role in evasion of the host immune response; plant chitinases liberate chitin molecules from the fungal cell wall which act as elicitors of the plant immune response, deacetylation of the liberated chitin neutralizes elicitor activity. This Pestalotiopsis sp protein is Chitin deacetylase.